The following is a 244-amino-acid chain: Venom nerve growth factor 3 (244 aa).

The signal sequence occupies residues 1 to 18; it reads MSMLCYTLIIAFLIGIWA. A propeptide spanning residues 19 to 125 is cleaved from the precursor; it reads APKSEDNVPL…TLNRNIRAKR (107 aa). The segment covering 47–66 has biased composition (basic and acidic residues); sequence GLKTSRNTDQRHPAPKKAED. A disordered region spans residues 47 to 67; it reads GLKTSRNTDQRHPAPKKAEDQ. Disulfide bonds link Cys-139–Cys-205, Cys-181–Cys-233, and Cys-193–Cys-235.

It belongs to the NGF-beta family. Homodimer; non-covalently linked. As to expression, expressed by the venom gland.

Its subcellular location is the secreted. Functionally, nerve growth factor is important for the development and maintenance of the sympathetic and sensory nervous systems. It stimulates division and differentiation of sympathetic and embryonic sensory neurons as well as basal forebrain cholinergic neurons in the brain. Its relevance in the snake venom is not clear. However, it has been shown to inhibit metalloproteinase-dependent proteolysis of platelet glycoprotein Ib alpha, suggesting a metalloproteinase inhibition to prevent metalloprotease autodigestion and/or protection against prey proteases. Binds a lipid between the two protein chains in the homodimer. The lipid-bound form promotes histamine relase from mouse mast cells, contrary to the lipid-free form. The protein is Venom nerve growth factor 3 of Notechis scutatus scutatus (Mainland tiger snake).